The following is a 343-amino-acid chain: Methylthioribose-1-phosphate isomerase (343 aa).

Substrate is bound by residues 44-46 (RGA), Arg-85, and Gln-192. Residue Asp-233 is the Proton donor of the active site. 243 to 244 (NK) lines the substrate pocket.

This sequence belongs to the eIF-2B alpha/beta/delta subunits family. MtnA subfamily.

The enzyme catalyses 5-(methylsulfanyl)-alpha-D-ribose 1-phosphate = 5-(methylsulfanyl)-D-ribulose 1-phosphate. It functions in the pathway amino-acid biosynthesis; L-methionine biosynthesis via salvage pathway; L-methionine from S-methyl-5-thio-alpha-D-ribose 1-phosphate: step 1/6. Functionally, catalyzes the interconversion of methylthioribose-1-phosphate (MTR-1-P) into methylthioribulose-1-phosphate (MTRu-1-P). This chain is Methylthioribose-1-phosphate isomerase, found in Carboxydothermus hydrogenoformans (strain ATCC BAA-161 / DSM 6008 / Z-2901).